Consider the following 357-residue polypeptide: MLFSSRFLALAALLGQALALPIDDFSQSDAGLKVKLTSMGNTRVKAVVTNEGEQEISFLKFNTFFDSAPTQKVQIMKAGSLIPFSGVDFYFNMANLPAEAFKTLAPGASAEAEFDIAATADLSPGGSYTVSSAGFLRIAGGNGTAITGRMRYRSNQMKLNVDGDMAAKVQSAVPTIEKRTRIDGNSCRGNYGQLLSRALQGCSSYAGRAAQAASNGDAQKFQEYFKTNSPQVRQSVAARFQAIVQECSSASNGKTTYLCEDRFRFCQPGLIAYTIPTQSVVANCPSYWKLPPVVNRGLEPDHGYVVVHEFTHATSIFSPGTEDHGYGYEECRRLNAQQSLSNADNYSLFAAAVSRGA.

An N-terminal signal peptide occupies residues 1–19 (MLFSSRFLALAALLGQALA). Positions 20 to 179 (LPIDDFSQSD…QSAVPTIEKR (160 aa)) are excised as a propeptide. Disulfide bonds link Cys187/Cys259 and Cys266/Cys284. A Zn(2+)-binding site is contributed by His308. Residue Glu309 is part of the active site. Residues His312 and Asp323 each contribute to the Zn(2+) site.

This sequence belongs to the peptidase M35 family. Zn(2+) is required as a cofactor.

It is found in the secreted. It catalyses the reaction Preferential cleavage of bonds with hydrophobic residues in P1'. Also 3-Asn-|-Gln-4 and 8-Gly-|-Ser-9 bonds in insulin B chain.. Its function is as follows. Secreted metalloproteinase that allows assimilation of proteinaceous substrates. Shows high activities on basic nuclear substrates such as histone and protamine. The chain is Neutral protease 2 homolog UREG_02006 from Uncinocarpus reesii (strain UAMH 1704).